Here is a 739-residue protein sequence, read N- to C-terminus: Catalase-peroxidase 1 (739 aa).

Residues 1–33 (MPEDRPIEDSPPIGEAQTDAPAGGCPAGFGRIK) are disordered. Residues 113-236 (WHAAGTYRVS…LAAVQMGLIY (124 aa)) constitute a cross-link (tryptophyl-tyrosyl-methioninium (Trp-Tyr) (with M-262)). His114 acts as the Proton acceptor in catalysis. Residues 236–262 (YVNPEGPNGNPDPQASAIDIRETFGRM) constitute a cross-link (tryptophyl-tyrosyl-methioninium (Tyr-Met) (with W-113)). Residue His277 coordinates heme b.

It belongs to the peroxidase family. Peroxidase/catalase subfamily. In terms of assembly, homodimer or homotetramer. Requires heme b as cofactor. Formation of the three residue Trp-Tyr-Met cross-link is important for the catalase, but not the peroxidase activity of the enzyme.

It catalyses the reaction H2O2 + AH2 = A + 2 H2O. The enzyme catalyses 2 H2O2 = O2 + 2 H2O. Bifunctional enzyme with both catalase and broad-spectrum peroxidase activity. May play a role in the intracellular survival of mycobacteria. The chain is Catalase-peroxidase 1 from Mycolicibacterium smegmatis (strain ATCC 700084 / mc(2)155) (Mycobacterium smegmatis).